The following is a 134-amino-acid chain: Arsenate reductase (134 aa).

Catalysis depends on nucleophile residues cysteine 11, cysteine 83, and cysteine 90. 2 disulfides stabilise this stretch: cysteine 11/cysteine 83 and cysteine 83/cysteine 90.

It belongs to the low molecular weight phosphotyrosine protein phosphatase family. Thioredoxin-coupled ArsC subfamily.

Its subcellular location is the cytoplasm. It catalyses the reaction arsenate + [thioredoxin]-dithiol + H(+) = arsenite + [thioredoxin]-disulfide + H2O. In terms of biological role, catalyzes the reduction of arsenate [As(V)] to arsenite [As(III)]. The sequence is that of Arsenate reductase from Bacillus cereus (strain AH187).